We begin with the raw amino-acid sequence, 515 residues long: Brahma-associated protein of 60 kDa (515 aa).

The interval 1 to 124 is disordered; sequence MSQRFAPGQA…GGSKSDFATA (124 aa). Positions 17-34 are enriched in pro residues; the sequence is QPPPPAPGMRPYPPPGAS. Positions 49–62 are enriched in low complexity; it reads PVPGTANVAGVPGV. A compositionally biased stretch (gly residues) spans 90–103; that stretch reads TGAGGGGVGSGGGS. The interval 116–204 is DNA-binding; it reads GSKSDFATAK…SKEPTNDGEE (89 aa). The region spanning 291–368 is the SWIB/MDM2 domain; sequence YQPLQFKLDP…PQRLNPLLHP (78 aa).

In terms of assembly, there are 2 distinct Brahma complexes in the fruit fly, the Brahma-associated proteins (BAP) and Polybromo-containing BAP (PBAP) complexes, which are composed of common subunits Brm, Mor, Snr1/Bap45, Bap111/Dalo, Bap55, Bap60 and Act42A/Bap47, and additional signature subunits osa in the BAP complex and Polybromo and Bap170 in the PBAP complex. Interacts with sisA and sc. Interacts with mor. Interacts with p53. Interacts with erm (via N-terminal). Interacts with akirin; interaction is immune stimulation-dependent; activates selected Rel target gene promoters.

In terms of biological role, involved in the recruitment and site-specific anchoring of the Brahma complex at specific promoter sites. The Brahma complex is a multiprotein complex which is the equivalent of the yeast SWI/SNF complex and acts by remodeling the chromatin by catalyzing an ATP-dependent alteration in the structure of nucleosomal DNA. This complex can both serve as a transcriptional coactivator or corepressor, depending on the context. Participates in X-chromosomal dosage compensation. Participates in neurogenesis. This is Brahma-associated protein of 60 kDa (Bap60) from Drosophila melanogaster (Fruit fly).